A 372-amino-acid chain; its full sequence is Glutamate 5-kinase (372 aa).

Position 14 (lysine 14) interacts with ATP. Substrate is bound by residues serine 54, aspartate 141, and asparagine 153. 173–174 lines the ATP pocket; that stretch reads TD. The PUA domain maps to 280–358; the sequence is RGHVVIDAGA…GEIETVLGYM (79 aa).

It belongs to the glutamate 5-kinase family.

It localises to the cytoplasm. The enzyme catalyses L-glutamate + ATP = L-glutamyl 5-phosphate + ADP. It participates in amino-acid biosynthesis; L-proline biosynthesis; L-glutamate 5-semialdehyde from L-glutamate: step 1/2. Its function is as follows. Catalyzes the transfer of a phosphate group to glutamate to form L-glutamate 5-phosphate. This Burkholderia orbicola (strain AU 1054) protein is Glutamate 5-kinase.